We begin with the raw amino-acid sequence, 225 residues long: Techylectin-like protein (225 aa).

Residues 32-225 enclose the Fibrinogen C-terminal domain; that stretch reads CPSPPLPIDC…WTEIKIKDVK (194 aa). A disulfide bridge connects residues cysteine 41 and cysteine 60. The short motif at 75–77 is the Cell attachment site element; it reads RGD. Residues aspartate 164 and threonine 170 each coordinate Ca(2+). Cysteine 172 and cysteine 185 are oxidised to a cystine.

In terms of tissue distribution, expressed by the venom gland.

It is found in the secreted. Its function is as follows. Lectin involved in innate immunity. The protein is Techylectin-like protein of Phoneutria nigriventer (Brazilian armed spider).